We begin with the raw amino-acid sequence, 423 residues long: MTESVLDYMTRLGRAAREASRVIGRASTAQKNRALQAAADALDAARAELTAANELDLAAGRASGLEPALLDRLALTPARIDGMITGLRQVASLPDPVGAIRDMSYRPSGIQVGKMRTPLGVIGIIYESRPNVTIDAASLCLKSGNATILRGGSEAIHSNRAIATCIQRGLAEAGLPAAVVQVVETTDREAVGALISMPEFVDVIVPRGGRGLIERISRDARVPVIKHLDGICHIYVSQHADLDKAWNVAFNAKTYRYGICGAMETLLVDQQVAERFLPEMARRFVEKGVELRGCERTQAIISAKPATEADWHTEYLDAILSIRVVDGLNQAIEHINHYGSHHTDSIISEHQGEARQFMAEVDSASVMLNTPTCFADGFEYGLGAEIGISTDKLHARGPVGLEGLTCEKYVVIGDGQLRGQGSC.

The protein belongs to the gamma-glutamyl phosphate reductase family.

The protein localises to the cytoplasm. It catalyses the reaction L-glutamate 5-semialdehyde + phosphate + NADP(+) = L-glutamyl 5-phosphate + NADPH + H(+). Its pathway is amino-acid biosynthesis; L-proline biosynthesis; L-glutamate 5-semialdehyde from L-glutamate: step 2/2. In terms of biological role, catalyzes the NADPH-dependent reduction of L-glutamate 5-phosphate into L-glutamate 5-semialdehyde and phosphate. The product spontaneously undergoes cyclization to form 1-pyrroline-5-carboxylate. The sequence is that of Gamma-glutamyl phosphate reductase from Pseudomonas putida (strain ATCC 47054 / DSM 6125 / CFBP 8728 / NCIMB 11950 / KT2440).